A 341-amino-acid polypeptide reads, in one-letter code: MSSSEKQLSTPATIQTASTITICALYKFVRLDAYEALREPLSNKMASVDVKGTLLLAAEGINGTIAGPQTGIDTVLAFLGEQPGLDNISHKESYSEENPFHRTKVKLKKEIVTMGIEGIDPNQVVGTYVKPKDWNALISDPEVVLVDTRNDYEIEIGTFKNAINPNTETFREFPDYVAKNLDKNKHKKVAMYCTGGIRCEKSTAYLKEQGFEEVYHLEGGILKYLEEVPSTETMWEGECFVFDGRVAVNHELEQGQYDQCFACRFPLTDVEKESEHYVKGVSCHRCHDKVSEQQRSRYAERQRQISLAEERGESHIGGDIQNIIEERRQEKNDKKAKQANK.

In terms of domain architecture, Rhodanese spans 139 to 233 (SDPEVVLVDT…YLEEVPSTET (95 aa)). Cysteine 193 serves as the catalytic Cysteine persulfide intermediate. 2 stretches are compositionally biased toward basic and acidic residues: residues 306–316 (SLAEERGESHI) and 324–341 (IEER…QANK). Residues 306 to 341 (SLAEERGESHIGGDIQNIIEERRQEKNDKKAKQANK) are disordered.

It belongs to the TrhO family.

The catalysed reaction is uridine(34) in tRNA + AH2 + O2 = 5-hydroxyuridine(34) in tRNA + A + H2O. Functionally, catalyzes oxygen-dependent 5-hydroxyuridine (ho5U) modification at position 34 in tRNAs. The polypeptide is tRNA uridine(34) hydroxylase (Colwellia psychrerythraea (strain 34H / ATCC BAA-681) (Vibrio psychroerythus)).